We begin with the raw amino-acid sequence, 525 residues long: GMP synthase [glutamine-hydrolyzing] (525 aa).

A Glutamine amidotransferase type-1 domain is found at 13-202 (TILVLDFGSQ…AVDLCHAKQN (190 aa)). Cys-89 functions as the Nucleophile in the catalytic mechanism. Catalysis depends on residues His-176 and Glu-178. A GMPS ATP-PPase domain is found at 203–400 (WTMKNFIGTE…LGISHELVWR (198 aa)). Residue 231–237 (SGGVDST) coordinates ATP. Arg-304, Asp-462, Lys-517, and Glu-523 together coordinate XMP.

In terms of assembly, homodimer. Mg(2+) is required as a cofactor.

The protein localises to the cytoplasm. The protein resides in the cytosol. The catalysed reaction is XMP + L-glutamine + ATP + H2O = GMP + L-glutamate + AMP + diphosphate + 2 H(+). It participates in purine metabolism; GMP biosynthesis; GMP from XMP (L-Gln route): step 1/1. Functionally, catalyzes the conversion of xanthine monophosphate (XMP) to GMP in the presence of glutamine and ATP through an adenyl-XMP intermediate. This Candida glabrata (strain ATCC 2001 / BCRC 20586 / JCM 3761 / NBRC 0622 / NRRL Y-65 / CBS 138) (Yeast) protein is GMP synthase [glutamine-hydrolyzing] (GUA1).